Here is a 302-residue protein sequence, read N- to C-terminus: Lipoyl synthase (302 aa).

[4Fe-4S] cluster is bound by residues C44, C49, C55, C70, C74, C77, and S283. The 217-residue stretch at 56 to 272 (WSKKHATVMI…ARVAKSKGFL (217 aa)) folds into the Radical SAM core domain.

It belongs to the radical SAM superfamily. Lipoyl synthase family. The cofactor is [4Fe-4S] cluster.

The protein localises to the cytoplasm. It carries out the reaction [[Fe-S] cluster scaffold protein carrying a second [4Fe-4S](2+) cluster] + N(6)-octanoyl-L-lysyl-[protein] + 2 oxidized [2Fe-2S]-[ferredoxin] + 2 S-adenosyl-L-methionine + 4 H(+) = [[Fe-S] cluster scaffold protein] + N(6)-[(R)-dihydrolipoyl]-L-lysyl-[protein] + 4 Fe(3+) + 2 hydrogen sulfide + 2 5'-deoxyadenosine + 2 L-methionine + 2 reduced [2Fe-2S]-[ferredoxin]. Its pathway is protein modification; protein lipoylation via endogenous pathway; protein N(6)-(lipoyl)lysine from octanoyl-[acyl-carrier-protein]: step 2/2. Catalyzes the radical-mediated insertion of two sulfur atoms into the C-6 and C-8 positions of the octanoyl moiety bound to the lipoyl domains of lipoate-dependent enzymes, thereby converting the octanoylated domains into lipoylated derivatives. The polypeptide is Lipoyl synthase (Orientia tsutsugamushi (strain Ikeda) (Rickettsia tsutsugamushi)).